An 86-amino-acid polypeptide reads, in one-letter code: Putative membrane protein insertion efficiency factor (86 aa).

The interval 67–86 (LHEGGDDPVPPVKNNDNREH) is disordered.

Belongs to the UPF0161 family.

It is found in the cell inner membrane. In terms of biological role, could be involved in insertion of integral membrane proteins into the membrane. This chain is Putative membrane protein insertion efficiency factor, found in Photorhabdus laumondii subsp. laumondii (strain DSM 15139 / CIP 105565 / TT01) (Photorhabdus luminescens subsp. laumondii).